The sequence spans 397 residues: tRNA-specific 2-thiouridylase MnmA (397 aa).

ATP contacts are provided by residues 19-26 (AMSGGVDS) and Leu-45. Cys-113 acts as the Nucleophile in catalysis. Cysteines 113 and 210 form a disulfide. Gly-137 lines the ATP pocket. The interval 160 to 162 (RDQ) is interaction with tRNA. The Cysteine persulfide intermediate role is filled by Cys-210.

This sequence belongs to the MnmA/TRMU family.

The protein resides in the cytoplasm. It carries out the reaction S-sulfanyl-L-cysteinyl-[protein] + uridine(34) in tRNA + AH2 + ATP = 2-thiouridine(34) in tRNA + L-cysteinyl-[protein] + A + AMP + diphosphate + H(+). In terms of biological role, catalyzes the 2-thiolation of uridine at the wobble position (U34) of tRNA, leading to the formation of s(2)U34. This Rhodopseudomonas palustris (strain ATCC BAA-98 / CGA009) protein is tRNA-specific 2-thiouridylase MnmA.